The primary structure comprises 532 residues: Calnexin homolog 2 (532 aa).

The first 25 residues, 1–25, serve as a signal peptide directing secretion; the sequence is MRERIITFVSLLLVALLSFPSVSYC. Topologically, residues 26–468 are lumenal; that stretch reads DDQTILYESF…EKAETQPNLT (443 aa). Residues Ser-34 and Asp-65 each coordinate Ca(2+). Cys-110 and Cys-145 are disulfide-bonded. The an alpha-D-glucoside site is built by Tyr-114, Lys-116, Tyr-136, and Asp-143. Residues 208–302 are disordered; sequence NLLSAEDFEP…DEEDGEWEAP (95 aa). Residues 225–358 form a p domain (Extended arm) region; sequence IPDPEDKKPE…RDIPNPDYFE (134 aa). Over residues 226-242 the composition is skewed to basic and acidic residues; it reads PDPEDKKPEDWDERAKI. A run of 5 repeats spans residues 227 to 238, 244 to 255, 263 to 274, 282 to 293, and 297 to 307. 4 X approximate repeats regions lie at residues 227 to 293 and 297 to 354; these read DPED…DWDD and GEWE…IPNP. 2 stretches are compositionally biased toward acidic residues: residues 252-283 and 290-299; these read DWDE…VEDP and DWDDEEDGEW. Cysteines 309 and 315 form a disulfide. Repeat copies occupy residues 316–326, 330–340, and 344–354. Glu-373 provides a ligand contact to an alpha-D-glucoside. Position 384 (Asp-384) interacts with Ca(2+). Asn-466 carries an N-linked (GlcNAc...) asparagine glycan. A helical membrane pass occupies residues 469–489; it reads IGVLISIVIVFLSLFFKLIFG. The Cytoplasmic segment spans residues 490 to 532; sequence GAKAKVEKKKPETAAETSTSEAKTEEKAEAVAAPRKRQTRRES. Residues 493 to 532 are disordered; the sequence is AKVEKKKPETAAETSTSEAKTEEKAEAVAAPRKRQTRRES. Residues 523-532 show a composition bias toward basic residues; sequence PRKRQTRRES.

It belongs to the calreticulin family.

The protein localises to the endoplasmic reticulum membrane. Functionally, calcium-binding protein that interacts with newly synthesized monoglucosylated glycoproteins in the endoplasmic reticulum. It may act in assisting protein assembly and/or in the retention within the ER of unassembled protein subunits. It seems to play a major role in the quality control apparatus of the ER by the retention of incorrectly folded proteins. This Arabidopsis thaliana (Mouse-ear cress) protein is Calnexin homolog 2.